Here is a 181-residue protein sequence, read N- to C-terminus: Disulfide bond formation protein B (181 aa).

The Cytoplasmic portion of the chain corresponds to 1–13 (MLSVGQWPNKPFA). Residues 14–30 (WLLLFLGCSGLLGAALY) form a helical membrane-spanning segment. The Periplasmic segment spans residues 31–48 (FQMVLNLEPCVKCVYQRM). The cysteines at positions 40 and 43 are disulfide-linked. Residues 49–64 (AVIGIGLSAIVGLFGS) traverse the membrane as a helical segment. The Cytoplasmic portion of the chain corresponds to 65–71 (GLWLTRW). A helical membrane pass occupies residues 72–89 (AALIGWLYSSYQGLLIAY). Over 90–145 (DHWDLQTSKNAFFAVCESAPNFPDWAPMHEWMPGLFAAPGLCGDIDWQWLGLGMPG) the chain is Periplasmic. A disulfide bridge connects residues Cys105 and Cys131. A helical membrane pass occupies residues 146-164 (WMTVIFAGLLLIGIIVTIC). Over 165-181 (HIISSFTKKDGLVLYHK) the chain is Cytoplasmic.

Belongs to the DsbB family.

It is found in the cell inner membrane. In terms of biological role, required for disulfide bond formation in some periplasmic proteins. Acts by oxidizing the DsbA protein. In Idiomarina loihiensis (strain ATCC BAA-735 / DSM 15497 / L2-TR), this protein is Disulfide bond formation protein B.